The sequence spans 301 residues: UDP-N-acetylenolpyruvoylglucosamine reductase (301 aa).

Residues 26-193 (KTGGPAQYLA…VSATFGLEPG (168 aa)) form the FAD-binding PCMH-type domain. Residue arginine 172 is part of the active site. The active-site Proton donor is the serine 222. The active site involves glutamate 292.

Belongs to the MurB family. FAD is required as a cofactor.

Its subcellular location is the cytoplasm. The catalysed reaction is UDP-N-acetyl-alpha-D-muramate + NADP(+) = UDP-N-acetyl-3-O-(1-carboxyvinyl)-alpha-D-glucosamine + NADPH + H(+). It participates in cell wall biogenesis; peptidoglycan biosynthesis. Cell wall formation. The protein is UDP-N-acetylenolpyruvoylglucosamine reductase of Lactobacillus johnsonii (strain CNCM I-12250 / La1 / NCC 533).